A 182-amino-acid polypeptide reads, in one-letter code: CDP-diacylglycerol--glycerol-3-phosphate 3-phosphatidyltransferase (182 aa).

Over glutamine 2–phenylalanine 12 the chain is Cytoplasmic. Residues arginine 13–leucine 37 traverse the membrane as a helical segment. Topologically, residues isoleucine 38–threonine 60 are periplasmic. The chain crosses the membrane as a helical span at residues arginine 61 to leucine 81. At valine 82–tyrosine 86 the chain is on the cytoplasmic side. Residues histidine 87–alanine 107 form a helical membrane-spanning segment. Residues leucine 108–proline 145 lie on the Periplasmic side of the membrane. A helical membrane pass occupies residues asparagine 146 to methionine 168. The Cytoplasmic portion of the chain corresponds to leucine 169 to aspartate 181.

The protein belongs to the CDP-alcohol phosphatidyltransferase class-I family.

Its subcellular location is the cell inner membrane. It carries out the reaction a CDP-1,2-diacyl-sn-glycerol + sn-glycerol 3-phosphate = a 1,2-diacyl-sn-glycero-3-phospho-(1'-sn-glycero-3'-phosphate) + CMP + H(+). It functions in the pathway phospholipid metabolism; phosphatidylglycerol biosynthesis; phosphatidylglycerol from CDP-diacylglycerol: step 1/2. Functionally, catalyzes the conversion of cytidine diphosphate diacylglycerol (CDP-DG) and glycerol 3-phosphate into phosphatidylglycerol. Essential for the synthesis of anionic phospholipids, thereby playing a role in balancing the ratio of zwitterionic and anionic phospholipids, which is thought to be important for normal membrane function. The protein is CDP-diacylglycerol--glycerol-3-phosphate 3-phosphatidyltransferase of Shigella sonnei (strain Ss046).